Consider the following 428-residue polypeptide: Enolase (428 aa).

Q163 serves as a coordination point for (2R)-2-phosphoglycerate. Catalysis depends on E205, which acts as the Proton donor. Mg(2+) is bound by residues D242, E286, and D313. K338, R367, S368, and K389 together coordinate (2R)-2-phosphoglycerate. The Proton acceptor role is filled by K338.

The protein belongs to the enolase family. Mg(2+) serves as cofactor.

The protein resides in the cytoplasm. It localises to the secreted. The protein localises to the cell surface. The enzyme catalyses (2R)-2-phosphoglycerate = phosphoenolpyruvate + H2O. It functions in the pathway carbohydrate degradation; glycolysis; pyruvate from D-glyceraldehyde 3-phosphate: step 4/5. Its function is as follows. Catalyzes the reversible conversion of 2-phosphoglycerate (2-PG) into phosphoenolpyruvate (PEP). It is essential for the degradation of carbohydrates via glycolysis. The sequence is that of Enolase from Geobacter sulfurreducens (strain ATCC 51573 / DSM 12127 / PCA).